Consider the following 278-residue polypeptide: Alcohol dehydrogenase-related 31 kDa protein (278 aa).

Position 11–34 (11–34) interacts with NAD(+); that stretch reads YVADCGGIALETSKVLMTKNIAKL. A substrate-binding site is contributed by Ser139. Tyr152 (proton acceptor) is an active-site residue.

The protein belongs to the short-chain dehydrogenases/reductases (SDR) family.

The polypeptide is Alcohol dehydrogenase-related 31 kDa protein (Adhr) (Drosophila persimilis (Fruit fly)).